Consider the following 194-residue polypeptide: UPF0301 protein BPEN_258 (194 aa).

This sequence belongs to the UPF0301 (AlgH) family.

The sequence is that of UPF0301 protein BPEN_258 from Blochmanniella pennsylvanica (strain BPEN).